A 104-amino-acid chain; its full sequence is Naphthalene 1,2-dioxygenase system, ferredoxin component (104 aa).

A Rieske domain is found at Ile6–Ile101. The [2Fe-2S] cluster site is built by Cys45, His47, Cys64, and His67.

The protein belongs to the bacterial ring-hydroxylating dioxygenase ferredoxin component family. As to quaternary structure, the naphthalene dioxygenase (NDO) multicomponent enzyme system is composed of an electron transfer component and a dioxygenase component (iron sulfur protein (ISP)). The electron transfer component is composed of a ferredoxin reductase (NdoR) and a ferredoxin (NdoA), and the dioxygenase component is formed of a heterohexamer (trimer of heterodimers) of three large alpha subunits (NdoB) and three small beta subunits (NdoC). [2Fe-2S] cluster is required as a cofactor.

The protein operates within aromatic compound metabolism; naphthalene degradation. In terms of biological role, component of the naphthalene dioxygenase (NDO) multicomponent enzyme system which catalyzes the incorporation of both atoms of molecular oxygen into naphthalene to form cis-(1R,2S)-dihydroxy-1,2-dihydronaphthalene. Functions as an intermediate electron transfer protein via a specific interaction with iron sulfur protein components (ISP) (NdoB and NdoC). The protein is Naphthalene 1,2-dioxygenase system, ferredoxin component of Pseudomonas aeruginosa.